Consider the following 229-residue polypeptide: MQIIWLGHGSFRIEIGDQVLLIDPWLTGNPMLAEDQHAAATTGATHILITHGHFDHTADVVALSKSLEAPVVGIYDFMSYFEAKEGLSVVGFNMGGTVTLGDVAVSLVPALHSTSYGPDATAPLGREAGFIIKGERYTVYVSGDTGISAEMDWIGDYYKPDIGILSAGGHFTMDMKGAAYAAKRYFDFKTVIPCHYKTFDLLEQSATDLIDALPDVDVIEPQVMTPIRF.

This sequence belongs to the UPF0173 family.

This Roseobacter denitrificans (strain ATCC 33942 / OCh 114) (Erythrobacter sp. (strain OCh 114)) protein is UPF0173 metal-dependent hydrolase RD1_1994.